Consider the following 290-residue polypeptide: Ribosome-inactivating protein bryodin I (290 aa).

The first 23 residues, 1 to 23 (MIKLLVLWLLILTIFLKSPTVEG), serve as a signal peptide directing secretion. Active-site residues include glutamate 183 and glutamate 212. Residues asparagine 214 and asparagine 250 are each glycosylated (N-linked (GlcNAc...) asparagine). The propeptide at 271–290 (AIGEDISMTLIGFEHGLYGI) is removed in mature form.

It belongs to the ribosome-inactivating protein family. Type 1 RIP subfamily. Post-translationally, appears to undergo proteolytic cleavage in the C-terminal to produce a shorter protein.

It catalyses the reaction Endohydrolysis of the N-glycosidic bond at one specific adenosine on the 28S rRNA.. In terms of biological role, ribosome-inactivating protein of type 1, inhibits protein synthesis in animal cells. The chain is Ribosome-inactivating protein bryodin I from Bryonia dioica (Red bryony).